Consider the following 146-residue polypeptide: Kappa-casein (146 aa).

O-linked (GalNAc...) threonine glycosylation is found at T97, T107, T112, and T118. T121 carries the phosphothreonine modification. The residue at position 125 (S125) is a Phosphoserine; alternate. S125 carries an O-linked (GalNAc...) serine; alternate glycan. O-linked (GalNAc...) threonine glycosylation occurs at T142. A Phosphoserine modification is found at S143.

The protein belongs to the kappa-casein family. As to expression, mammary gland specific. Secreted in milk.

The protein resides in the secreted. Its function is as follows. Kappa-casein stabilizes micelle formation, preventing casein precipitation in milk. This Panthera uncia (Snow leopard) protein is Kappa-casein (CSN3).